The following is a 320-amino-acid chain: Methionyl-tRNA formyltransferase (320 aa).

A (6S)-5,6,7,8-tetrahydrofolate-binding site is contributed by 117–120 (SLLP).

The protein belongs to the Fmt family.

The enzyme catalyses L-methionyl-tRNA(fMet) + (6R)-10-formyltetrahydrofolate = N-formyl-L-methionyl-tRNA(fMet) + (6S)-5,6,7,8-tetrahydrofolate + H(+). In terms of biological role, attaches a formyl group to the free amino group of methionyl-tRNA(fMet). The formyl group appears to play a dual role in the initiator identity of N-formylmethionyl-tRNA by promoting its recognition by IF2 and preventing the misappropriation of this tRNA by the elongation apparatus. This chain is Methionyl-tRNA formyltransferase, found in Bordetella petrii (strain ATCC BAA-461 / DSM 12804 / CCUG 43448).